A 266-amino-acid chain; its full sequence is NAD kinase 2 (266 aa).

D51 functions as the Proton acceptor in the catalytic mechanism. NAD(+) is bound by residues 51–52 (DG), 123–124 (NE), R150, D152, 163–168 (TGYSKS), and A187.

The protein belongs to the NAD kinase family. The cofactor is a divalent metal cation.

Its subcellular location is the cytoplasm. It carries out the reaction NAD(+) + ATP = ADP + NADP(+) + H(+). Involved in the regulation of the intracellular balance of NAD and NADP, and is a key enzyme in the biosynthesis of NADP. Catalyzes specifically the phosphorylation on 2'-hydroxyl of the adenosine moiety of NAD to yield NADP. In Oceanobacillus iheyensis (strain DSM 14371 / CIP 107618 / JCM 11309 / KCTC 3954 / HTE831), this protein is NAD kinase 2.